The primary structure comprises 89 residues: Translation initiation factor IF-1, chloroplastic (89 aa).

Residues 1–72 (MKKQDLIDME…TKGRIIYRLR (72 aa)) form the S1-like domain.

This sequence belongs to the IF-1 family. In terms of assembly, component of the 30S ribosomal translation pre-initiation complex which assembles on the 30S ribosome in the order IF-2 and IF-3, IF-1 and N-formylmethionyl-tRNA(fMet); mRNA recruitment can occur at any time during PIC assembly.

The protein localises to the plastid. Its subcellular location is the chloroplast. One of the essential components for the initiation of protein synthesis. Stabilizes the binding of IF-2 and IF-3 on the 30S subunit to which N-formylmethionyl-tRNA(fMet) subsequently binds. Helps modulate mRNA selection, yielding the 30S pre-initiation complex (PIC). Upon addition of the 50S ribosomal subunit IF-1, IF-2 and IF-3 are released leaving the mature 70S translation initiation complex. The protein is Translation initiation factor IF-1, chloroplastic of Angiopteris evecta (Mule's foot fern).